The chain runs to 437 residues: Transcription factor AP-2-alpha (437 aa).

Residue Lys-10 forms a Glycyl lysine isopeptide (Lys-Gly) (interchain with G-Cter in SUMO); alternate linkage. Lys-10 participates in a covalent cross-link: Glycyl lysine isopeptide (Lys-Gly) (interchain with G-Cter in SUMO2); alternate. Positions 14-107 (CEDRHDGTSN…GQRQSQESGL (94 aa)) are disordered. Positions 57–62 (YFPPPY) match the PPxY motif motif. 2 stretches are compositionally biased toward low complexity: residues 65–74 (IYPQSQDPYS) and 88–101 (QPQP…GQRQ). Residues Lys-177 and Lys-184 each participate in a glycyl lysine isopeptide (Lys-Gly) (interchain with G-Cter in SUMO2) cross-link. Ser-239 carries the phosphoserine; by PKA modification. The interval 280 to 410 (RRKAANVTLL…YLTEALKAMD (131 aa)) is H-S-H (helix-span-helix), dimerization. The segment covering 414–427 (LSNNPNSHTDNNAK) has biased composition (polar residues). The disordered stretch occupies residues 414 to 437 (LSNNPNSHTDNNAKSSDKEEKHRK). Residues 428-437 (SSDKEEKHRK) show a composition bias toward basic and acidic residues.

It belongs to the AP-2 family. In terms of assembly, binds DNA as a dimer. Can form homodimers or heterodimers with other AP-2 family members. Interacts with WWOX. Interacts with CITED4. Interacts with UBE2I. Interacts with RALBP1 in a complex also containing EPN1 and NUMB during interphase and mitosis. Interacts with KCTD1; this interaction represses transcription activation. Interacts (via C-terminus) with CITED2 (via C-terminus); the interaction stimulates TFAP2A-transcriptional activation. Interacts (via N-terminus) with EP300 (via N-terminus); the interaction requires CITED2. Interacts with KCTD15; this interaction inhibits TFAP2A transcriptional activation. Post-translationally, sumoylated on Lys-10; which inhibits transcriptional activity.

It localises to the nucleus. Sequence-specific DNA-binding protein that interacts with inducible viral and cellular enhancer elements to regulate transcription of selected genes. AP-2 factors bind to the consensus sequence 5'-GCCNNNGGC-3' and activate genes involved in a large spectrum of important biological functions including proper eye, face, body wall, limb and neural tube development. They also suppress a number of genes including MCAM/MUC18, C/EBP alpha and MYC. AP-2-alpha is the only AP-2 protein required for early morphogenesis of the lens vesicle. Together with the CITED2 coactivator, stimulates the PITX2 P1 promoter transcription activation. Associates with chromatin to the PITX2 P1 promoter region. The chain is Transcription factor AP-2-alpha (TFAP2A) from Homo sapiens (Human).